A 551-amino-acid chain; its full sequence is Cytochrome c oxidase subunit 1 (551 aa).

The helical transmembrane segment at 29 to 49 (VIGIQYLVTSFLFFFIGGSFA) threads the bilayer. Histidine 76 serves as a coordination point for Fe(II)-heme a. The next 11 membrane-spanning stretches (helical) occupy residues 79 to 99 (IMIF…LIPL), 113 to 133 (AVAF…FFVG), 156 to 176 (LWIL…INFV), 205 to 225 (LILL…FDLI), 245 to 265 (LFWF…FGVI), 283 to 303 (IAYS…HHMF), 313 to 333 (MFFM…IFSW), 348 to 368 (MLFA…GVMV), 382 to 402 (FVVG…LFSG), 424 to 444 (FILT…LGLM), and 466 to 486 (IGAY…FWSL). Cu cation contacts are provided by histidine 251, tyrosine 255, histidine 300, and histidine 301. Residues 251-255 (HPAVY) constitute a cross-link (1'-histidyl-3'-tyrosine (His-Tyr)). Residue histidine 386 coordinates heme a3. Fe(II)-heme a is bound at residue histidine 388.

This sequence belongs to the heme-copper respiratory oxidase family. Cu(2+) serves as cofactor. Heme is required as a cofactor.

The protein localises to the cell membrane. It catalyses the reaction 4 Fe(II)-[cytochrome c] + O2 + 8 H(+)(in) = 4 Fe(III)-[cytochrome c] + 2 H2O + 4 H(+)(out). The protein operates within energy metabolism; oxidative phosphorylation. Functionally, cytochrome c oxidase is the component of the respiratory chain that catalyzes the reduction of oxygen to water. Subunits 1-3 form the functional core of the enzyme complex. CO I is the catalytic subunit of the enzyme. Electrons originating in cytochrome c are transferred via the copper A center of subunit 2 and heme A of subunit 1 to the bimetallic center formed by heme A3 and copper B. The chain is Cytochrome c oxidase subunit 1 (ctaD) from Synechocystis sp. (strain ATCC 27184 / PCC 6803 / Kazusa).